A 954-amino-acid polypeptide reads, in one-letter code: Valine--tRNA ligase (954 aa).

The 'HIGH' region signature appears at 48 to 58 (PNVTGSLHMGH). The 'KMSKS' region motif lies at 560 to 564 (KMSKS). Residue lysine 563 coordinates ATP. The stretch at 886-954 (INKDTELARL…RAQYLSIENL (69 aa)) forms a coiled coil.

Belongs to the class-I aminoacyl-tRNA synthetase family. ValS type 1 subfamily. Monomer.

Its subcellular location is the cytoplasm. It carries out the reaction tRNA(Val) + L-valine + ATP = L-valyl-tRNA(Val) + AMP + diphosphate. Functionally, catalyzes the attachment of valine to tRNA(Val). As ValRS can inadvertently accommodate and process structurally similar amino acids such as threonine, to avoid such errors, it has a 'posttransfer' editing activity that hydrolyzes mischarged Thr-tRNA(Val) in a tRNA-dependent manner. This Mannheimia succiniciproducens (strain KCTC 0769BP / MBEL55E) protein is Valine--tRNA ligase.